A 171-amino-acid chain; its full sequence is MQMYHVVLGCSLAILLVILDIPQASCDDVVIQKRQVDPAEMDRLLDPKRKRPFCNAFTGCGKKRSDESMGTLVEMNSEPAVDDLSRQILSEVKLWEAIQEARVELLRRRQEQLQQQSNQFGAGMDRPLPLPIAGYRRKRFADPESQAPAPHSNLPRATSQLQEEITKPWSR.

Positions Met-1–Cys-26 are cleaved as a signal peptide. The propeptide occupies Asp-27 to Arg-49. A disulfide bridge connects residues Cys-54 and Cys-60. Cys-60 carries the post-translational modification Cysteine amide. Positions Arg-64–Arg-171 are excised as a propeptide. The disordered stretch occupies residues Gln-116–Arg-171.

Central nervous system; most neurons exhibit coexpression with burs.

Its subcellular location is the secreted. Functionally, cardioregulatory neurohormone that increases heart beat rate during adult wing inflation; has no effect on beat amplitude. The effect of CCAP is both ino- and chronotropic. This is Cardioactive peptide from Periplaneta americana (American cockroach).